Consider the following 199-residue polypeptide: dITP/XTP pyrophosphatase (199 aa).

Position 7–12 (7–12) interacts with substrate; that stretch reads TGNAGK. Mg(2+) is bound by residues E37 and D66. Residue D66 is the Proton acceptor of the active site. Substrate is bound by residues S67, 146 to 149, K169, and 174 to 175; these read FGYD and HR.

It belongs to the HAM1 NTPase family. Homodimer. Requires Mg(2+) as cofactor.

It catalyses the reaction XTP + H2O = XMP + diphosphate + H(+). The catalysed reaction is dITP + H2O = dIMP + diphosphate + H(+). The enzyme catalyses ITP + H2O = IMP + diphosphate + H(+). In terms of biological role, pyrophosphatase that catalyzes the hydrolysis of nucleoside triphosphates to their monophosphate derivatives, with a high preference for the non-canonical purine nucleotides XTP (xanthosine triphosphate), dITP (deoxyinosine triphosphate) and ITP. Seems to function as a house-cleaning enzyme that removes non-canonical purine nucleotides from the nucleotide pool, thus preventing their incorporation into DNA/RNA and avoiding chromosomal lesions. The chain is dITP/XTP pyrophosphatase from Deinococcus geothermalis (strain DSM 11300 / CIP 105573 / AG-3a).